A 138-amino-acid polypeptide reads, in one-letter code: Ribosomal RNA large subunit methyltransferase H (138 aa).

Residues Leu57, Gly86, and 105-110 (LSPLTF) contribute to the S-adenosyl-L-methionine site.

The protein belongs to the RNA methyltransferase RlmH family. In terms of assembly, homodimer.

It is found in the cytoplasm. It carries out the reaction pseudouridine(1915) in 23S rRNA + S-adenosyl-L-methionine = N(3)-methylpseudouridine(1915) in 23S rRNA + S-adenosyl-L-homocysteine + H(+). In terms of biological role, specifically methylates the pseudouridine at position 1915 (m3Psi1915) in 23S rRNA. This is Ribosomal RNA large subunit methyltransferase H from Prochlorococcus marinus (strain MIT 9312).